The chain runs to 428 residues: MSSSLPPSSCDCFVSLPPASLSSFVLFGKNSDRPRDEVQEIVYYPAASHPLGSKVKCTFIEVEQVRETLAVVLSRPAWLWGAEMGANEMGVCIGNEAVWTKEPVTEGEALLGMDLVRLALERGPSAQKAVQVITELLGEYGQGGSCREEPEPFIYHNTFLLCDRSEAYVLETAGPYWAAERIVEGARNLSNQLSISVCPWSEHPQLRSHALQQGWWDGQGEFNFSVVYSLEKQPERMAAAKLRYRAGQELLRMQEGHMTVKSMQSILRDKESGICMDSGGFRTTSSMVSVLPRSPHEPCIHLLSATPDPSRSVYKPFMFSPRVTQVPWVLSPTFGEQDPVNQIPRFQTQVDRRHELYRQHQRALEACKGNKEAEETLRQKQLKVEEENLHWVDTFLDTSKSADPVGGSDIFRICVEKELALYKETGEK.

Cys10 is an active-site residue.

The protein belongs to the peptidase C69 family. Secernin subfamily.

In Xenopus laevis (African clawed frog), this protein is Secernin-2 (scrn2).